We begin with the raw amino-acid sequence, 407 residues long: Multifunctional CCA protein (407 aa).

The ATP site is built by G8 and R11. 2 residues coordinate CTP: G8 and R11. Mg(2+) contacts are provided by D21 and D23. 3 residues coordinate ATP: R91, R137, and R140. CTP-binding residues include R91, R137, and R140. The region spanning T228–W329 is the HD domain.

It belongs to the tRNA nucleotidyltransferase/poly(A) polymerase family. Bacterial CCA-adding enzyme type 1 subfamily. Monomer. Can also form homodimers and oligomers. Requires Mg(2+) as cofactor. It depends on Ni(2+) as a cofactor.

The catalysed reaction is a tRNA precursor + 2 CTP + ATP = a tRNA with a 3' CCA end + 3 diphosphate. The enzyme catalyses a tRNA with a 3' CCA end + 2 CTP + ATP = a tRNA with a 3' CCACCA end + 3 diphosphate. Catalyzes the addition and repair of the essential 3'-terminal CCA sequence in tRNAs without using a nucleic acid template. Adds these three nucleotides in the order of C, C, and A to the tRNA nucleotide-73, using CTP and ATP as substrates and producing inorganic pyrophosphate. tRNA 3'-terminal CCA addition is required both for tRNA processing and repair. Also involved in tRNA surveillance by mediating tandem CCA addition to generate a CCACCA at the 3' terminus of unstable tRNAs. While stable tRNAs receive only 3'-terminal CCA, unstable tRNAs are marked with CCACCA and rapidly degraded. This is Multifunctional CCA protein from Aliivibrio salmonicida (strain LFI1238) (Vibrio salmonicida (strain LFI1238)).